The following is a 283-amino-acid chain: MAEITASLVKELRERTGAGMMECKKALVEANGDIELAIDNMRKSGQAKAAKKAGRVAAEGVILARIGAGFGVLVEMNCETDFVAKDAGFLGLANEVADFALANKGTTIETLAAQFEEKRAALVAKIGENMNIRRVQYLDGQVIAQYLHGAKIGVLVAGEGSDEELKKVAMHVAASRPEFVNPEDVSAEVVEHERQIQIDIAINSGKPKEIAEKMVEGRMKKFTGEVSLTGQAFVMDPSQSVGDYLKSVNTKVTNFIRLEVGEGIEKVEEDFAAEVAKITGGNA.

Residues 80-83 (TDFV) are involved in Mg(2+) ion dislocation from EF-Tu.

The protein belongs to the EF-Ts family.

The protein localises to the cytoplasm. Its function is as follows. Associates with the EF-Tu.GDP complex and induces the exchange of GDP to GTP. It remains bound to the aminoacyl-tRNA.EF-Tu.GTP complex up to the GTP hydrolysis stage on the ribosome. This chain is Elongation factor Ts, found in Actinobacillus pleuropneumoniae serotype 3 (strain JL03).